The primary structure comprises 441 residues: MSVYAHLSQTPAHPSARIQPVMILAGGTGGHIFPGLAVAKVLRARGVPVTWLGADGAMETRLVPQHDIPIDTLAITGLRGKGMVKLLGAPLRVMRAVRAAGFVLRKRQPRAVISFGGFAAGPGGLAARLLGAPLLVHEQNRAPGMTNKVLSRFARRVLTGFPGSFAGEEAVGNPVRAEIAALPAPADRLVGRTGPVCVLVLGGSQGARVLNQAVPTALAALGHPDVEVRHQCGEKLRAEAEVAYAQASVNASVEPFIADMAAAYAWADLVVCRAGASTLAELCAAGVGSVLVPFAAAVDDHQTRNAEYLVGADAAVLLKQDDSLAVRLQQVLQTLLTDPARRLSMANAARTLAKPDAAERIADIILQEAGTGDRQPPAVEERAGFGIGKEQQHKQDSMQNSVDGQFSGRSTAAVANLQCRSLFDSHRLAILTPGTFAGGAA.

UDP-N-acetyl-alpha-D-glucosamine-binding positions include 28–30, N140, R176, S204, I257, and Q302; that span reads TGG.

The protein belongs to the glycosyltransferase 28 family. MurG subfamily.

It localises to the cell inner membrane. It catalyses the reaction di-trans,octa-cis-undecaprenyl diphospho-N-acetyl-alpha-D-muramoyl-L-alanyl-D-glutamyl-meso-2,6-diaminopimeloyl-D-alanyl-D-alanine + UDP-N-acetyl-alpha-D-glucosamine = di-trans,octa-cis-undecaprenyl diphospho-[N-acetyl-alpha-D-glucosaminyl-(1-&gt;4)]-N-acetyl-alpha-D-muramoyl-L-alanyl-D-glutamyl-meso-2,6-diaminopimeloyl-D-alanyl-D-alanine + UDP + H(+). It participates in cell wall biogenesis; peptidoglycan biosynthesis. Its function is as follows. Cell wall formation. Catalyzes the transfer of a GlcNAc subunit on undecaprenyl-pyrophosphoryl-MurNAc-pentapeptide (lipid intermediate I) to form undecaprenyl-pyrophosphoryl-MurNAc-(pentapeptide)GlcNAc (lipid intermediate II). The chain is UDP-N-acetylglucosamine--N-acetylmuramyl-(pentapeptide) pyrophosphoryl-undecaprenol N-acetylglucosamine transferase from Xanthomonas oryzae pv. oryzae (strain KACC10331 / KXO85).